The chain runs to 331 residues: 6-phosphogluconolactonase (331 aa).

An N6-acetyllysine modification is found at Lys-287.

The protein belongs to the cycloisomerase 2 family.

It carries out the reaction 6-phospho-D-glucono-1,5-lactone + H2O = 6-phospho-D-gluconate + H(+). It functions in the pathway carbohydrate degradation; pentose phosphate pathway; D-ribulose 5-phosphate from D-glucose 6-phosphate (oxidative stage): step 2/3. Its function is as follows. Catalyzes the hydrolysis of 6-phosphogluconolactone to 6-phosphogluconate. This chain is 6-phosphogluconolactonase, found in Shigella boydii serotype 18 (strain CDC 3083-94 / BS512).